A 198-amino-acid chain; its full sequence is NAD(P)H dehydrogenase (quinone) (198 aa).

In terms of domain architecture, Flavodoxin-like spans valine 4–valine 189. FMN contacts are provided by residues serine 10 to isoleucine 15 and threonine 78 to phenylalanine 80. Tyrosine 12 is an NAD(+) binding site. Residue tryptophan 98 participates in substrate binding. FMN contacts are provided by residues serine 113 to glycine 118 and histidine 133.

Belongs to the WrbA family. FMN is required as a cofactor.

The enzyme catalyses a quinone + NADH + H(+) = a quinol + NAD(+). It catalyses the reaction a quinone + NADPH + H(+) = a quinol + NADP(+). In Escherichia coli O157:H7, this protein is NAD(P)H dehydrogenase (quinone).